Consider the following 273-residue polypeptide: Bifunctional protein FolD (273 aa).

Residues 152–154, threonine 179, and isoleucine 220 each bind NADP(+); that span reads GRS.

The protein belongs to the tetrahydrofolate dehydrogenase/cyclohydrolase family. Homodimer.

The enzyme catalyses (6R)-5,10-methylene-5,6,7,8-tetrahydrofolate + NADP(+) = (6R)-5,10-methenyltetrahydrofolate + NADPH. It carries out the reaction (6R)-5,10-methenyltetrahydrofolate + H2O = (6R)-10-formyltetrahydrofolate + H(+). It participates in one-carbon metabolism; tetrahydrofolate interconversion. Functionally, catalyzes the oxidation of 5,10-methylenetetrahydrofolate to 5,10-methenyltetrahydrofolate and then the hydrolysis of 5,10-methenyltetrahydrofolate to 10-formyltetrahydrofolate. The sequence is that of Bifunctional protein FolD from Petrotoga mobilis (strain DSM 10674 / SJ95).